The chain runs to 279 residues: Dehydrogenase/reductase SDR family member 4 (279 aa).

Residue 37–61 coordinates NADP(+); the sequence is LVTASTDGIGLAIARRLAQDGAHVV. K93 is subject to N6-acetyllysine; alternate. K93 carries the N6-succinyllysine; alternate modification. S170 provides a ligand contact to substrate. The active-site Proton acceptor is Y183. Residue K187 coordinates NADP(+). N6-acetyllysine; alternate is present on K217. K217 is subject to N6-succinyllysine; alternate. At S221 the chain carries Phosphoserine. Residues K228 and K235 each carry the N6-succinyllysine modification. The Peroxisomal targeting signal signature appears at 277-279; the sequence is SRL.

Belongs to the short-chain dehydrogenases/reductases (SDR) family. As to quaternary structure, homotetramer. As to expression, detected in heart, kidney, liver and small intestine. Detected at lower levels in brain, lung, stomach and spleen.

It localises to the peroxisome. The enzyme catalyses a secondary alcohol + NADP(+) = a ketone + NADPH + H(+). It catalyses the reaction 3alpha-hydroxy-5beta-pregnan-20-one + NADP(+) = 5beta-pregnan-3,20-dione + NADPH + H(+). The catalysed reaction is 5beta-dihydrotestosterone + NADPH + H(+) = 5beta-androstane-3alpha,17beta-diol + NADP(+). It carries out the reaction all-trans-retinol + NADP(+) = all-trans-retinal + NADPH + H(+). The enzyme catalyses isatin + NADPH + H(+) = 3-hydroxyindolin-2-one + NADP(+). Its activity is regulated as follows. Inhibited by kaempferol, quercetin, genistein and myristic acid. In terms of biological role, NADPH-dependent oxidoreductase which catalyzes the reduction of a variety of compounds bearing carbonyl groups including ketosteroids, alpha-dicarbonyl compounds, aldehydes, aromatic ketones and quinones. Reduces all-trans-retinal and 9-cis retinal. Reduces 3-ketosteroids and benzil into 3alpha-hydroxysteroids and S-benzoin, respectively, in contrast to the stereoselectivity of primates DHRS4s which produce 3beta-hydroxysteroids and R-benzoin. In the reverse reaction, catalyzes the NADP-dependent oxidation of 3alpha-hydroxysteroids and alcohol, but with much lower efficiency. Involved in the metabolism of 3alpha-hydroxysteroids, retinoid, isatin and xenobiotic carbonyl compounds. The polypeptide is Dehydrogenase/reductase SDR family member 4 (DHRS4) (Sus scrofa (Pig)).